Reading from the N-terminus, the 153-residue chain is ORM1-like protein 3 (153 aa).

Topologically, residues 1–21 (MNVGTAHSEVNPNTRVMNSRG) are cytoplasmic. The next 2 helical transmembrane spans lie at 22–42 (IWLS…SIPF) and 43–63 (VSVP…MYIF). Residues 64–94 (LHTVKGTPFETPDQGKARLLTHWEQMDYGVQ) lie on the Cytoplasmic side of the membrane. Residues 95–117 (FTASRKFLTITPIILYFLTSFYT) traverse the membrane as a helical segment. The Extracellular portion of the chain corresponds to 118–121 (KYDR). The chain crosses the membrane as a helical span at residues 122–142 (VHFVINTISLLTVLIPKLPQF). At Pro137 the chain carries Hydroxyproline. At 143–153 (HGVRLFGINKY) the chain is on the cytoplasmic side.

It belongs to the ORM family. In terms of assembly, ceramide-sensitive subunit of the serine palmitoyltransferase (SPT) complex, which is also composed of SPTLC1, SPTLC2/3 and SPTSSA/B. When hydroxylated at Pro-137, ubiquitinated via 'Lys-48'-linkage, leading to proteasomal degradation. In endothelial cells, ORMDL3 proteasomal degradation is controlled by the sphingosine 1-phosphate receptor signaling pathway.

It is found in the endoplasmic reticulum membrane. Plays an essential role in the homeostatic regulation of sphingolipid de novo biosynthesis by modulating the activity of the serine palmitoyltransferase (SPT) in response to ceramide levels. When complexed to SPT, the binding of ceramides to its N-terminus stabilizes a conformation that block SPT substrate entry, hence preventing SPT catalytic activity. Through this mechanism, maintains ceramide levels at sufficient concentrations for the production of complex sphingolipids, but which prevents the accumulation of ceramides to levels that trigger apoptosis. This Danio rerio (Zebrafish) protein is ORM1-like protein 3 (ormdl3).